Reading from the N-terminus, the 652-residue chain is Phosphomethylpyrimidine synthase (652 aa).

Substrate is bound by residues Asn235, Met264, Tyr293, His329, Ser349 to Gly351, Asp390 to Arg393, and Glu429. Position 433 (His433) interacts with Zn(2+). Tyr456 is a binding site for substrate. Residue His497 participates in Zn(2+) binding. [4Fe-4S] cluster is bound by residues Cys577, Cys580, and Cys585.

This sequence belongs to the ThiC family. Homodimer. [4Fe-4S] cluster is required as a cofactor.

The enzyme catalyses 5-amino-1-(5-phospho-beta-D-ribosyl)imidazole + S-adenosyl-L-methionine = 4-amino-2-methyl-5-(phosphooxymethyl)pyrimidine + CO + 5'-deoxyadenosine + formate + L-methionine + 3 H(+). Its pathway is cofactor biosynthesis; thiamine diphosphate biosynthesis. Its function is as follows. Catalyzes the synthesis of the hydroxymethylpyrimidine phosphate (HMP-P) moiety of thiamine from aminoimidazole ribotide (AIR) in a radical S-adenosyl-L-methionine (SAM)-dependent reaction. The polypeptide is Phosphomethylpyrimidine synthase (Shewanella woodyi (strain ATCC 51908 / MS32)).